We begin with the raw amino-acid sequence, 127 residues long: V-type proton ATPase subunit F (127 aa).

This sequence belongs to the V-ATPase F subunit family. In terms of assembly, V-ATPase is a heteromultimeric enzyme made up of two complexes: the ATP-hydrolytic V1 complex and the proton translocation V0 complex. The V1 complex consists of three catalytic AB heterodimers that form a heterohexamer, three peripheral stalks each consisting of EG heterodimers, one central rotor including subunits D and F, and the regulatory subunits C and H. The proton translocation complex V0 consists of the proton transport subunit a, a ring of proteolipid subunits c9c'', rotary subunit d, subunits e and f, and the accessory subunits VhaAC45 and ATP6AP2.

Functionally, subunit of the V1 complex of vacuolar(H+)-ATPase (V-ATPase), a multisubunit enzyme composed of a peripheral complex (V1) that hydrolyzes ATP and a membrane integral complex (V0) that translocates protons. V-ATPase is responsible for acidifying and maintaining the pH of intracellular compartments and in some cell types, is targeted to the plasma membrane, where it is responsible for acidifying the extracellular environment. This is V-type proton ATPase subunit F (Vha14) from Anopheles gambiae (African malaria mosquito).